The chain runs to 471 residues: Glutamate--tRNA ligase (471 aa).

Positions 9–19 match the 'HIGH' region motif; sequence PSPTGYLHVGG. Positions 98, 100, 125, and 127 each coordinate Zn(2+). Residues 237–241 carry the 'KMSKS' region motif; that stretch reads KLSKR. ATP is bound at residue Lys-240.

This sequence belongs to the class-I aminoacyl-tRNA synthetase family. Glutamate--tRNA ligase type 1 subfamily. In terms of assembly, monomer. Zn(2+) is required as a cofactor.

The protein localises to the cytoplasm. The enzyme catalyses tRNA(Glu) + L-glutamate + ATP = L-glutamyl-tRNA(Glu) + AMP + diphosphate. Catalyzes the attachment of glutamate to tRNA(Glu) in a two-step reaction: glutamate is first activated by ATP to form Glu-AMP and then transferred to the acceptor end of tRNA(Glu). This Escherichia coli (strain ATCC 8739 / DSM 1576 / NBRC 3972 / NCIMB 8545 / WDCM 00012 / Crooks) protein is Glutamate--tRNA ligase.